We begin with the raw amino-acid sequence, 429 residues long: 3-phosphoshikimate 1-carboxyvinyltransferase (429 aa).

3-phosphoshikimate is bound by residues Lys22, Ser23, and Arg27. Lys22 contacts phosphoenolpyruvate. Phosphoenolpyruvate is bound by residues Gly94 and Arg122. Residues Ser167, Gln169, Asp315, and Lys342 each contribute to the 3-phosphoshikimate site. Gln169 serves as a coordination point for phosphoenolpyruvate. The active-site Proton acceptor is Asp315. 2 residues coordinate phosphoenolpyruvate: Arg346 and Arg388.

It belongs to the EPSP synthase family. Monomer.

It is found in the cytoplasm. It catalyses the reaction 3-phosphoshikimate + phosphoenolpyruvate = 5-O-(1-carboxyvinyl)-3-phosphoshikimate + phosphate. It functions in the pathway metabolic intermediate biosynthesis; chorismate biosynthesis; chorismate from D-erythrose 4-phosphate and phosphoenolpyruvate: step 6/7. Catalyzes the transfer of the enolpyruvyl moiety of phosphoenolpyruvate (PEP) to the 5-hydroxyl of shikimate-3-phosphate (S3P) to produce enolpyruvyl shikimate-3-phosphate and inorganic phosphate. The protein is 3-phosphoshikimate 1-carboxyvinyltransferase of Geobacter metallireducens (strain ATCC 53774 / DSM 7210 / GS-15).